Consider the following 251-residue polypeptide: Guanine nucleotide-binding protein subunit gamma 3 (251 aa).

Over residues 1-10 (MSAPSGGGEG) the composition is skewed to gly residues. The tract at residues 1-44 (MSAPSGGGEGGGKESAAGGVSSSSLAPSSLPPPRPKSPPEYPDL) is disordered. Residues 14-28 (ESAAGGVSSSSLAPS) show a composition bias toward low complexity. A compositionally biased stretch (pro residues) spans 29–41 (SLPPPRPKSPPEY). The 81-residue stretch at 46-126 (GKRREAARVQ…LSLVSFCCCC (81 aa)) folds into the G protein gamma domain. Cys248 is modified (cysteine methyl ester). Cys248 carries S-farnesyl cysteine lipidation. Residues 249–251 (LAF) constitute a propeptide, removed in mature form.

G proteins are composed of 3 units, alpha, beta and gamma. As to expression, expressed in flowers and siliques.

Functionally, guanine nucleotide-binding proteins (G proteins) are involved as a modulator or transducer in various transmembrane signaling systems. The beta and gamma chains are required for the GTPase activity, for replacement of GDP by GTP, and for G protein-effector interaction. In Arabidopsis thaliana (Mouse-ear cress), this protein is Guanine nucleotide-binding protein subunit gamma 3 (GG3).